Reading from the N-terminus, the 514-residue chain is Respiratory nitrate reductase 2 beta chain (514 aa).

4Fe-4S ferredoxin-type domains are found at residues 7–35 (VGMV…GREG), 174–205 (TFMM…KREE), and 207–236 (GIVL…FNWK). [4Fe-4S] cluster contacts are provided by C16, C19, C22, C26, C183, C186, and C191. [3Fe-4S] cluster is bound by residues C195, C216, and C222. Residues C226, C243, C246, C258, and C262 each contribute to the [4Fe-4S] cluster site.

As to quaternary structure, dimer of heterotrimers each composed of an alpha, a beta and a gamma chain. Alpha and beta are catalytic chains; gamma chains are involved in binding the enzyme complex to the cytoplasmic membrane. The cofactor is [4Fe-4S] cluster. Requires [3Fe-4S] cluster as cofactor.

Its subcellular location is the cell membrane. The enzyme catalyses nitrate + a quinol = a quinone + nitrite + H2O. In terms of biological role, this is a second nitrate reductase enzyme which can substitute for the NRA enzyme and allows E.coli to use nitrate as an electron acceptor during anaerobic growth. The beta chain is an electron transfer unit containing four cysteine clusters involved in the formation of iron-sulfur centers. Electrons are transferred from the gamma chain to the molybdenum cofactor of the alpha subunit. The polypeptide is Respiratory nitrate reductase 2 beta chain (narY) (Escherichia coli (strain K12)).